Reading from the N-terminus, the 189-residue chain is Peptide deformylase (189 aa).

Residues Cys-93 and His-135 each coordinate Fe cation. Glu-136 is a catalytic residue. His-139 serves as a coordination point for Fe cation.

It belongs to the polypeptide deformylase family. Fe(2+) is required as a cofactor.

The catalysed reaction is N-terminal N-formyl-L-methionyl-[peptide] + H2O = N-terminal L-methionyl-[peptide] + formate. In terms of biological role, removes the formyl group from the N-terminal Met of newly synthesized proteins. Requires at least a dipeptide for an efficient rate of reaction. N-terminal L-methionine is a prerequisite for activity but the enzyme has broad specificity at other positions. This Karelsulcia muelleri (strain GWSS) (Sulcia muelleri) protein is Peptide deformylase.